The following is a 355-amino-acid chain: MKTDPNKEKALNAVLGQIEKQFGKGSIMKLGEDRSMDVETISTGSLSLDVALGAGGLPMGRIVEIYGPESSGKTTLTLEVIAAAQKQGKTCAFIDAEHALDPVYAQKLGVDIDNLLCSQPDTGEQALEICDALTRSGAVDVIIVDSVAALTPKAEIEGEIGDSHMGLAARMMSQAMRKLAGNLKQSNTLLIFINQIRMKIGVMFGNPETTTGGNALKFYASVRLDIRRTGAIKDRDEVIGNETRVKVVKNKIAAPFKQAEFQILYGQGINSTGELVDLGVVHKLIEKSGAWYAYKGSKIGQGRANAGKYLIENPEISDEIETALRSMLLSKGEKVAAGATDTAGDNVDMETGEVF.

Residue 67–74 coordinates ATP; the sequence is GPESSGKT.

Belongs to the RecA family.

The protein localises to the cytoplasm. In terms of biological role, can catalyze the hydrolysis of ATP in the presence of single-stranded DNA, the ATP-dependent uptake of single-stranded DNA by duplex DNA, and the ATP-dependent hybridization of homologous single-stranded DNAs. It interacts with LexA causing its activation and leading to its autocatalytic cleavage. The sequence is that of Protein RecA from Shewanella piezotolerans (strain WP3 / JCM 13877).